The following is a 132-amino-acid chain: Small ribosomal subunit protein uS11 (132 aa).

The protein belongs to the universal ribosomal protein uS11 family. Part of the 30S ribosomal subunit.

Functionally, located on the platform of the 30S subunit. This is Small ribosomal subunit protein uS11 from Sulfolobus acidocaldarius (strain ATCC 33909 / DSM 639 / JCM 8929 / NBRC 15157 / NCIMB 11770).